A 467-amino-acid polypeptide reads, in one-letter code: ATP-dependent protease ATPase subunit HslU (467 aa).

ATP contacts are provided by residues Val22 and 64-69; that span reads GVGKTE. A disordered region spans residues 146–185; sequence KASNNSNPLESLLGGAIPNFGNNDDEEEETPTEEIKTKRS. Residues 168-177 show a composition bias toward acidic residues; that stretch reads NDDEEEETPT. Positions 280, 345, and 417 each coordinate ATP.

Belongs to the ClpX chaperone family. HslU subfamily. As to quaternary structure, a double ring-shaped homohexamer of HslV is capped on each side by a ring-shaped HslU homohexamer. The assembly of the HslU/HslV complex is dependent on binding of ATP.

The protein localises to the cytoplasm. Functionally, ATPase subunit of a proteasome-like degradation complex; this subunit has chaperone activity. The binding of ATP and its subsequent hydrolysis by HslU are essential for unfolding of protein substrates subsequently hydrolyzed by HslV. HslU recognizes the N-terminal part of its protein substrates and unfolds these before they are guided to HslV for hydrolysis. The polypeptide is ATP-dependent protease ATPase subunit HslU (Staphylococcus haemolyticus (strain JCSC1435)).